A 361-amino-acid chain; its full sequence is Chorismate synthase (361 aa).

NADP(+)-binding residues include R48 and R54. FMN-binding positions include 125 to 127 (RSS), 238 to 239 (NA), G278, 293 to 297 (KPTSS), and R319.

Belongs to the chorismate synthase family. As to quaternary structure, homotetramer. FMNH2 is required as a cofactor.

The catalysed reaction is 5-O-(1-carboxyvinyl)-3-phosphoshikimate = chorismate + phosphate. It functions in the pathway metabolic intermediate biosynthesis; chorismate biosynthesis; chorismate from D-erythrose 4-phosphate and phosphoenolpyruvate: step 7/7. Functionally, catalyzes the anti-1,4-elimination of the C-3 phosphate and the C-6 proR hydrogen from 5-enolpyruvylshikimate-3-phosphate (EPSP) to yield chorismate, which is the branch point compound that serves as the starting substrate for the three terminal pathways of aromatic amino acid biosynthesis. This reaction introduces a second double bond into the aromatic ring system. This is Chorismate synthase from Citrobacter koseri (strain ATCC BAA-895 / CDC 4225-83 / SGSC4696).